The sequence spans 194 residues: Imidazoleglycerol-phosphate dehydratase (194 aa).

It belongs to the imidazoleglycerol-phosphate dehydratase family.

It is found in the cytoplasm. It catalyses the reaction D-erythro-1-(imidazol-4-yl)glycerol 3-phosphate = 3-(imidazol-4-yl)-2-oxopropyl phosphate + H2O. It participates in amino-acid biosynthesis; L-histidine biosynthesis; L-histidine from 5-phospho-alpha-D-ribose 1-diphosphate: step 6/9. This is Imidazoleglycerol-phosphate dehydratase from Oceanobacillus iheyensis (strain DSM 14371 / CIP 107618 / JCM 11309 / KCTC 3954 / HTE831).